The primary structure comprises 455 residues: DNA repair protein RadA (455 aa).

The C4-type zinc-finger motif lies at 12-29 (CSECGSYSPKWLGQCPGC). 95–102 (GEPGIGKS) provides a ligand contact to ATP. The RadA KNRFG motif motif lies at 252-256 (KNRFG). Residues 351-455 (DVFLSIAGGL…TIKDAVRLLQ (105 aa)) are lon-protease-like.

It belongs to the RecA family. RadA subfamily.

Its function is as follows. DNA-dependent ATPase involved in processing of recombination intermediates, plays a role in repairing DNA breaks. Stimulates the branch migration of RecA-mediated strand transfer reactions, allowing the 3' invading strand to extend heteroduplex DNA faster. Binds ssDNA in the presence of ADP but not other nucleotides, has ATPase activity that is stimulated by ssDNA and various branched DNA structures, but inhibited by SSB. Does not have RecA's homology-searching function. This chain is DNA repair protein RadA, found in Chlamydia muridarum (strain MoPn / Nigg).